Consider the following 129-residue polypeptide: Large ribosomal subunit protein bL20 (129 aa).

Belongs to the bacterial ribosomal protein bL20 family.

In terms of biological role, binds directly to 23S ribosomal RNA and is necessary for the in vitro assembly process of the 50S ribosomal subunit. It is not involved in the protein synthesizing functions of that subunit. The polypeptide is Large ribosomal subunit protein bL20 (Mycobacteroides abscessus (strain ATCC 19977 / DSM 44196 / CCUG 20993 / CIP 104536 / JCM 13569 / NCTC 13031 / TMC 1543 / L948) (Mycobacterium abscessus)).